The primary structure comprises 343 residues: Dihydroorotase (343 aa).

Positions 14 and 16 each coordinate Zn(2+). Substrate-binding positions include 16–18 and Asn42; that span reads HVR. Zn(2+) is bound by residues Lys98, His135, and His173. Lys98 is modified (N6-carboxylysine). Position 135 (His135) interacts with substrate. Leu219 is a substrate binding site. Position 247 (Asp247) interacts with Zn(2+). Asp247 is an active-site residue. His251 and Ala263 together coordinate substrate.

This sequence belongs to the metallo-dependent hydrolases superfamily. DHOase family. Class II DHOase subfamily. In terms of assembly, homodimer. Zn(2+) serves as cofactor.

It catalyses the reaction (S)-dihydroorotate + H2O = N-carbamoyl-L-aspartate + H(+). It participates in pyrimidine metabolism; UMP biosynthesis via de novo pathway; (S)-dihydroorotate from bicarbonate: step 3/3. Catalyzes the reversible cyclization of carbamoyl aspartate to dihydroorotate. The chain is Dihydroorotase from Marinobacter nauticus (strain ATCC 700491 / DSM 11845 / VT8) (Marinobacter aquaeolei).